A 2226-amino-acid polypeptide reads, in one-letter code: Rotatin (2226 aa).

The disordered stretch occupies residues 295-345 (ARGTHHSQNPSPGSSSPRPSVVGRTGQRPRGDGQDWDAASSSGSSSHAHVN). 2 stretches are compositionally biased toward low complexity: residues 304-318 (PSPG…VVGR) and 332-343 (AASSSGSSSHAH). The residue at position 310 (Ser310) is a Phosphoserine. An N6-acetyllysine modification is found at Lys811. The tract at residues 1534–1554 (SRTSQDRDPSSLSTSETTVAP) is disordered. Over residues 1543-1554 (SSLSTSETTVAP) the composition is skewed to polar residues.

The protein belongs to the rotatin family. Interacts with PPP1R35; this interaction allows the mutual recruitment to the centriole.

The protein localises to the cytoplasm. It is found in the cytoskeleton. The protein resides in the cilium basal body. Its subcellular location is the microtubule organizing center. It localises to the centrosome. In terms of biological role, involved in the genetic cascade that governs left-right specification. Plays a role in the maintenance of a normal ciliary structure. Required for correct asymmetric expression of NODAL, LEFTY and PITX2. In Homo sapiens (Human), this protein is Rotatin.